The primary structure comprises 61 residues: Small ribosomal subunit protein uS14B (61 aa).

Zn(2+)-binding residues include Cys-24, Cys-27, Cys-40, and Cys-43.

The protein belongs to the universal ribosomal protein uS14 family. Zinc-binding uS14 subfamily. In terms of assembly, part of the 30S ribosomal subunit. Contacts proteins S3 and S10. Zn(2+) is required as a cofactor.

In terms of biological role, binds 16S rRNA, required for the assembly of 30S particles and may also be responsible for determining the conformation of the 16S rRNA at the A site. In Streptococcus pyogenes serotype M6 (strain ATCC BAA-946 / MGAS10394), this protein is Small ribosomal subunit protein uS14B.